A 393-amino-acid polypeptide reads, in one-letter code: S-adenosylmethionine synthase (393 aa).

An ATP-binding site is contributed by H16. D18 contributes to the Mg(2+) binding site. E44 provides a ligand contact to K(+). E57 and Q100 together coordinate L-methionine. The segment at 100-110 is flexible loop; sequence QSNDIAQGVDH. ATP contacts are provided by residues 167–169, 238–239, D247, 253–254, A270, and K274; these read DAK, RF, and RK. D247 contributes to the L-methionine binding site. Residue K278 coordinates L-methionine.

This sequence belongs to the AdoMet synthase family. As to quaternary structure, homotetramer; dimer of dimers. It depends on Mg(2+) as a cofactor. K(+) serves as cofactor.

It localises to the cytoplasm. The enzyme catalyses L-methionine + ATP + H2O = S-adenosyl-L-methionine + phosphate + diphosphate. It participates in amino-acid biosynthesis; S-adenosyl-L-methionine biosynthesis; S-adenosyl-L-methionine from L-methionine: step 1/1. Catalyzes the formation of S-adenosylmethionine (AdoMet) from methionine and ATP. The overall synthetic reaction is composed of two sequential steps, AdoMet formation and the subsequent tripolyphosphate hydrolysis which occurs prior to release of AdoMet from the enzyme. In Albidiferax ferrireducens (strain ATCC BAA-621 / DSM 15236 / T118) (Rhodoferax ferrireducens), this protein is S-adenosylmethionine synthase.